Consider the following 1080-residue polypeptide: Ubiquitin-activating enzyme E1 1 (1080 aa).

A compositionally biased stretch (basic and acidic residues) spans 1-14; that stretch reads MLHKRASEANDKND. Disordered stretches follow at residues 1–20 and 29–50; these read MLHK…IIGS and RIDF…GSSR. The segment covering 38–49 has biased composition (low complexity); it reads DKSSSILASGSS. Residues Ala-502, Asp-528, Arg-539, Lys-552, and 600 to 601 each bind ATP; that span reads DN. The active-site Glycyl thioester intermediate is Cys-656.

It belongs to the ubiquitin-activating E1 family. As to quaternary structure, monomer. As to expression, expressed in leaves, flowers, roots and stems. Detected in germinating seeds, cotyledons, hypocotyls, vascular tissues, anthers, filaments, pollen, style, stigma, sepals, petals, ovary, developing ovules, funiculi and silique walls.

The enzyme catalyses ATP + ubiquitin + [E1 ubiquitin-activating enzyme]-L-cysteine = AMP + diphosphate + S-ubiquitinyl-[E1 ubiquitin-activating enzyme]-L-cysteine.. It participates in protein modification; protein ubiquitination. In terms of biological role, activates ubiquitin by first adenylating its C-terminal glycine residue with ATP, and thereafter linking this residue to the side chain of a cysteine residue in E1, yielding a ubiquitin-E1 thioester and free AMP. The polypeptide is Ubiquitin-activating enzyme E1 1 (UBA1) (Arabidopsis thaliana (Mouse-ear cress)).